Reading from the N-terminus, the 54-residue chain is Chymosin (54 aa).

Residues 1–27 constitute a propeptide, activation peptide; it reads SEITRVPLHKGKSLRKALKEHGLLEBF.

Belongs to the peptidase A1 family. In terms of assembly, monomer.

The catalysed reaction is Broad specificity similar to that of pepsin A. Clots milk by cleavage of a single 104-Ser-Phe-|-Met-Ala-107 bond in kappa-chain of casein.. Functionally, chymosin is synthesized in the mucosa of the stomach. The enzyme hydrolyzes casein to paracasein. This is Chymosin (CYM) from Felis catus (Cat).